Reading from the N-terminus, the 101-residue chain is Small ribosomal subunit protein uS14 (101 aa).

The protein belongs to the universal ribosomal protein uS14 family. In terms of assembly, part of the 30S ribosomal subunit. Contacts proteins S3 and S10.

Its function is as follows. Binds 16S rRNA, required for the assembly of 30S particles and may also be responsible for determining the conformation of the 16S rRNA at the A site. This is Small ribosomal subunit protein uS14 from Rhizobium etli (strain CIAT 652).